We begin with the raw amino-acid sequence, 400 residues long: Enoyl-[acyl-carrier-protein] reductase [NADH] (400 aa).

NAD(+) contacts are provided by residues 48 to 53 (GASTGY), 74 to 75 (FE), 111 to 112 (DA), and 139 to 140 (LA). Residue Tyr225 coordinates substrate. The active-site Proton donor is the Tyr235. NAD(+) is bound by residues Lys244 and 273-275 (VVT).

It belongs to the TER reductase family. In terms of assembly, monomer.

The catalysed reaction is a 2,3-saturated acyl-[ACP] + NAD(+) = a (2E)-enoyl-[ACP] + NADH + H(+). Its pathway is lipid metabolism; fatty acid biosynthesis. In terms of biological role, involved in the final reduction of the elongation cycle of fatty acid synthesis (FAS II). Catalyzes the reduction of a carbon-carbon double bond in an enoyl moiety that is covalently linked to an acyl carrier protein (ACP). In Burkholderia cenocepacia (strain ATCC BAA-245 / DSM 16553 / LMG 16656 / NCTC 13227 / J2315 / CF5610) (Burkholderia cepacia (strain J2315)), this protein is Enoyl-[acyl-carrier-protein] reductase [NADH].